Here is a 122-residue protein sequence, read N- to C-terminus: Ribosome-binding factor A (122 aa).

This sequence belongs to the RbfA family. As to quaternary structure, monomer. Binds 30S ribosomal subunits, but not 50S ribosomal subunits or 70S ribosomes.

It localises to the cytoplasm. Its function is as follows. One of several proteins that assist in the late maturation steps of the functional core of the 30S ribosomal subunit. Associates with free 30S ribosomal subunits (but not with 30S subunits that are part of 70S ribosomes or polysomes). Required for efficient processing of 16S rRNA. May interact with the 5'-terminal helix region of 16S rRNA. The protein is Ribosome-binding factor A of Polynucleobacter necessarius subsp. necessarius (strain STIR1).